We begin with the raw amino-acid sequence, 448 residues long: Glutamate--tRNA ligase 1 (448 aa).

A 'HIGH' region motif is present at residues 9–19; that stretch reads PSPTGKLHIGN. Residues 240–244 carry the 'KMSKS' region motif; it reads KISKR. K243 contacts ATP.

It belongs to the class-I aminoacyl-tRNA synthetase family. Glutamate--tRNA ligase type 1 subfamily. Monomer.

It localises to the cytoplasm. It carries out the reaction tRNA(Glu) + L-glutamate + ATP = L-glutamyl-tRNA(Glu) + AMP + diphosphate. Its function is as follows. Catalyzes the attachment of glutamate to tRNA(Glu) in a two-step reaction: glutamate is first activated by ATP to form Glu-AMP and then transferred to the acceptor end of tRNA(Glu). The chain is Glutamate--tRNA ligase 1 from Orientia tsutsugamushi (strain Ikeda) (Rickettsia tsutsugamushi).